We begin with the raw amino-acid sequence, 130 residues long: MSMQDPIADMLTRIRNGQAANKVAVTMPSSKLKVAIANVLKEEGFIEDFKIEGDAKPVLELVLKYFQGKPVVESIQRISRPGLRIYKKKDELPKVMAGLGIAVVSTSKGVMTDRAARQAGLGGEIICYVA.

The protein belongs to the universal ribosomal protein uS8 family. In terms of assembly, part of the 30S ribosomal subunit. Contacts proteins S5 and S12.

Functionally, one of the primary rRNA binding proteins, it binds directly to 16S rRNA central domain where it helps coordinate assembly of the platform of the 30S subunit. In Edwardsiella ictaluri (strain 93-146), this protein is Small ribosomal subunit protein uS8.